The following is a 333-amino-acid chain: Homoserine O-succinyltransferase (333 aa).

Residue cysteine 147 is the Acyl-thioester intermediate of the active site. Positions 168 and 196 each coordinate substrate. Histidine 239 functions as the Proton acceptor in the catalytic mechanism. Glutamate 241 is a catalytic residue. Arginine 253 lines the substrate pocket.

The protein belongs to the MetA family.

It is found in the cytoplasm. The catalysed reaction is L-homoserine + succinyl-CoA = O-succinyl-L-homoserine + CoA. It participates in amino-acid biosynthesis; L-methionine biosynthesis via de novo pathway; O-succinyl-L-homoserine from L-homoserine: step 1/1. Its function is as follows. Transfers a succinyl group from succinyl-CoA to L-homoserine, forming succinyl-L-homoserine. This is Homoserine O-succinyltransferase from Rhodopseudomonas palustris.